The chain runs to 656 residues: Rab proteins geranylgeranyltransferase component A 2 (656 aa).

Disordered regions lie at residues 188 to 209 and 609 to 656; these read MHTV…EDKA and PPPN…HLQN. Residues 639 to 656 are compositionally biased toward basic and acidic residues; the sequence is ESSEESKNLESPEKHLQN. A Phosphoserine modification is found at Ser649.

The protein belongs to the Rab GDI family. Monomer. Heterotrimer composed of RABGGTA, RABGGTB and CHML; within this trimer, RABGGTA and RABGGTB form the catalytic component B, while CHML (component A) mediates Rab protein binding. Interacts with RAB1A, RAB7A and RAB27A, but has much lower affinity for RAB1A, RAB7A and RAB27A than CHM. Interacts with the non-phosphorylated forms of RAB3A, RAB3B, RAB3C, RAB3D, RAB5B, RAB5C, RAB8A, RAB8B, RAB10, RAB12, RAB35, and RAB43.

It localises to the cytoplasm. It is found in the cytosol. In terms of biological role, substrate-binding subunit (component A) of the Rab geranylgeranyltransferase (GGTase) complex. Binds unprenylated Rab proteins and presents the substrate peptide to the catalytic component B. The component A is thought to be regenerated by transferring its prenylated Rab back to the donor membrane. Less effective than CHM in supporting prenylation of Rab3 family. The polypeptide is Rab proteins geranylgeranyltransferase component A 2 (CHML) (Homo sapiens (Human)).